Reading from the N-terminus, the 2144-residue chain is Insulin-like receptor (2144 aa).

The N-terminal stretch at 1-43 (MFNMPRGVTKSKSKRGKIKMENDMAAAATTTACTLGHICVLCR) is a signal peptide. Asparagine 74 is a glycosylation site (N-linked (GlcNAc...) asparagine). Residues 174–199 (RRQHQQQHHHHYQHHHQQHHQQHHQR) show a composition bias toward basic residues. Residues 174–200 (RRQHQQQHHHHYQHHHQQHHQQHHQRQ) are disordered. N-linked (GlcNAc...) asparagine glycosylation occurs at asparagine 203. The tract at residues 229–256 (NYKQQQQLQHNQQLPRATPQQKQQEKDR) is disordered. Residues 232-242 (QQQQLQHNQQL) show a composition bias toward low complexity. N-linked (GlcNAc...) asparagine glycosylation is found at asparagine 265, asparagine 356, asparagine 376, asparagine 406, asparagine 468, and asparagine 509. 8 disulfide bridges follow: cysteine 531-cysteine 539, cysteine 535-cysteine 545, cysteine 546-cysteine 554, cysteine 550-cysteine 564, cysteine 567-cysteine 576, cysteine 580-cysteine 591, cysteine 597-cysteine 618, and cysteine 635-cysteine 638. The FU repeat unit spans residues 542 to 586 (EHTCCSQDCLGGCVIDKNGNESCISCRNVSFNNICMDSCPKGYYQ). N-linked (GlcNAc...) asparagine glycosylation is found at asparagine 561 and asparagine 569. N-linked (GlcNAc...) asparagine glycans are attached at residues asparagine 751, asparagine 810, asparagine 824, asparagine 839, asparagine 864, asparagine 898, asparagine 946, asparagine 1053, asparagine 1147, asparagine 1218, and asparagine 1265. 2 Fibronectin type-III domains span residues 825–927 (VTTK…TNPG) and 928–1026 (RPSK…EYDD). A disordered region spans residues 1053 to 1084 (NGSSDKSDGAEGAALDSNAIPNGGATNPSRRR). Residues 1210 to 1305 (LKVDLEHANN…EVEHIKVEPP (96 aa)) enclose the Fibronectin type-III 3 domain. A helical membrane pass occupies residues 1311 to 1331 (VFFWLLGIGLAFLIVSLFGYV). Topologically, residues 1332–2144 (CYLHKRKVPS…PPNGFIGREA (813 aa)) are cytoplasmic. The tract at residues 1351–1354 (NPFY) is chico-binding. A Phosphotyrosine; by autocatalysis modification is found at tyrosine 1354. Residues 1371–1659 (IIQLAPLGQG…LEPQCPNSQF (289 aa)) enclose the Protein kinase domain. Residues 1377-1385 (LGQGSFGMV) and lysine 1405 contribute to the ATP site. The active-site Proton acceptor is aspartate 1519. Tyrosine 1545, tyrosine 1549, and tyrosine 1550 each carry phosphotyrosine; by autocatalysis. Disordered stretches follow at residues 1690–1724 (VPLD…DQPP), 1788–1871 (RGYE…KKTV), 1886–1962 (LFNH…ISDN), and 2020–2144 (ISHN…GREA). Serine 1816 is modified (phosphoserine). Low complexity-rich tracts occupy residues 1849–1860 (STASAGSSNASS) and 1894–1916 (SNAS…NLTS). Residues 2042–2062 (SDEDNEQEEDDEDEDDDVDDE) show a composition bias toward acidic residues. Positions 2063-2073 (HVEHIKMERMP) are enriched in basic and acidic residues. Residues 2084–2120 (SKTQPPRSRSVSQTRKSPTNPNSGIGATGAGNRSNLL) show a composition bias toward polar residues.

This sequence belongs to the protein kinase superfamily. Tyr protein kinase family. Insulin receptor subfamily. Tetramer of 2 alpha and 2 beta chains linked by disulfide bonds. The alpha chains contribute to the formation of the ligand-binding domain, while the beta chains carry the kinase domain. Interacts (via C-terminal cytoplasmic region) with dock/dreadlocks (via SH2 and SH3 domains); when autophosphorylated. May interact (via beta subunit) with chico/IRS-1; this interaction may lead to tyrosine phosphorylation of the insulin receptor substrate chico. Interacts with Elp6; the interaction may stabilize Elp6. Requires Mn(2+) as cofactor. The 280 kDa proreceptor is proteolytically processed to form a 120 kDa alpha subunit and a 170 kDa beta subunit. The beta subunit undergoes cell-specific cleavage to generate a 90 kDa beta subunit and a free 60 kDa C-terminal subunit. Both the 90 kDa and the 170 kDa beta subunits can assemble with the alpha subunits to form mature receptors. In terms of processing, autophosphorylated on tyrosine residues, including Tyr-1549 and Tyr-1550, in response to exogenous insulin. Tyr-1549 and Tyr-1550 are dephosphorylated by Ptp61F recruited by the dock/dreadlocks adapter protein. Post-translationally, phosphorylation of Tyr-1354 is required for Chico-binding.

It is found in the membrane. It localises to the cell projection. Its subcellular location is the axon. The protein resides in the growth cone membrane. It catalyses the reaction L-tyrosyl-[protein] + ATP = O-phospho-L-tyrosyl-[protein] + ADP + H(+). Its activity is regulated as follows. Activated in response to insulin. Autophosphorylation activates the kinase activity. In terms of biological role, has a ligand-stimulated tyrosine-protein kinase activity. Binds 3 insulin-like peptide ligands. Regulates cell number and cell size during development by regulating cell growth and survival, affecting body size and organ size, including ovaries and imaginal disks. Plays a role in life-span determination. May be involved in regulation of other neuroendocrine signaling pathways. Involved in the development of the embryonic nervous system. Functions upstream of dock/dreadlocks for photoreceptor (R cell) axon guidance and targeting in the visual system. Involved in the acs mediated recovery of gut enterocytes following the cytoplasmic purge response to intestinal bacterial infection. This chain is Insulin-like receptor, found in Drosophila melanogaster (Fruit fly).